We begin with the raw amino-acid sequence, 204 residues long: Urease accessory protein UreG (204 aa).

11–18 (GPVGAGKT) is a GTP binding site.

It belongs to the SIMIBI class G3E GTPase family. UreG subfamily. Homodimer. UreD, UreF and UreG form a complex that acts as a GTP-hydrolysis-dependent molecular chaperone, activating the urease apoprotein by helping to assemble the nickel containing metallocenter of UreC. The UreE protein probably delivers the nickel.

It localises to the cytoplasm. Its function is as follows. Facilitates the functional incorporation of the urease nickel metallocenter. This process requires GTP hydrolysis, probably effectuated by UreG. The chain is Urease accessory protein UreG from Staphylococcus aureus (strain bovine RF122 / ET3-1).